A 131-amino-acid chain; its full sequence is uncharacterized protein (131 aa).

This is an uncharacterized protein from Acanthamoeba polyphaga (Amoeba).